The sequence spans 307 residues: MAGFMYAPYNVYQGYGGNFGQNPHVAQPLAKNKQAAWKSNKASEPTDYLDNFQRAQLKAILSQVNPNLTPRLRKANTKEIGVQVNPRVDTGVQCSLGPRTLRRPPPPPCSPVKAADCVRFTRPLAVYSPVVDRRLFSLPQGGRLPKKSPDSQSQPLKERAPSPEDKEREKVSEKEPDTKDELEKRPVPGTEEPGNEEQTKSAFQFLEQKYGYFHCKDCKTRWESAYVWCISGSNKVYFKQLCRKCQKGYNPYRVEAIQCQVCAKTRCSCPQKQRHIDLKRPHRQELCGRCKNKRLSCDNTYSYKYIV.

The tract at residues 138-200 (LPQGGRLPKK…EEPGNEEQTK (63 aa)) is disordered. Over residues 156–186 (LKERAPSPEDKEREKVSEKEPDTKDELEKRP) the composition is skewed to basic and acidic residues. The segment at 208-293 (QKYGYFHCKD…QELCGRCKNK (86 aa)) adopts a 3CxxC-type zinc-finger fold.

Belongs to the ZAR1 family. As to expression, expressed in oocytes.

The protein localises to the cytoplasm. The protein resides in the cytoplasmic ribonucleoprotein granule. Its function is as follows. mRNA-binding protein required for maternal mRNA storage, translation and degradation during oocyte maturation. Probably promotes formation of some phase-separated membraneless compartment that stores maternal mRNAs in oocytes: acts by undergoing liquid-liquid phase separation upon binding to maternal mRNAs. Binds to the 3'-UTR of maternal mRNAs, inhibiting their translation. The sequence is that of Zygote arrest protein 2.L (zar2.L) from Xenopus laevis (African clawed frog).